A 248-amino-acid polypeptide reads, in one-letter code: Probable transcriptional regulatory protein PP_1214 (248 aa).

Positions 1-21 (MAGHSKWANIKHRKERQDAKR) are disordered.

Belongs to the TACO1 family.

The protein resides in the cytoplasm. This is Probable transcriptional regulatory protein PP_1214 from Pseudomonas putida (strain ATCC 47054 / DSM 6125 / CFBP 8728 / NCIMB 11950 / KT2440).